The following is an 887-amino-acid chain: ATP-dependent DNA helicase srs2 (887 aa).

The UvrD-like helicase ATP-binding domain occupies 9-304 (KFLNEEQRIS…LHLERNYRSA (296 aa)). Residues 33 to 38 (GSGKTR) and Arg302 contribute to the ATP site. Positions 305 to 597 (KPILELALSI…TISTLHAAKG (293 aa)) constitute a UvrD-like helicase C-terminal domain.

It belongs to the helicase family. UvrD subfamily.

The protein localises to the nucleus. It carries out the reaction Couples ATP hydrolysis with the unwinding of duplex DNA by translocating in the 3'-5' direction.. The catalysed reaction is ATP + H2O = ADP + phosphate + H(+). Functionally, ATP-dependent DNA helicase involved in DNA repair at least for UV-induced lesions. Also aids the recombinational repair of camptothecin-induced collapsed replication forks. This Schizosaccharomyces pombe (strain 972 / ATCC 24843) (Fission yeast) protein is ATP-dependent DNA helicase srs2 (srs2).